Here is a 188-residue protein sequence, read N- to C-terminus: Acyl-acyl carrier protein thioesterase ATL2, chloroplastic (188 aa).

The transit peptide at 1–47 (MFQATSTGAQIMHAAFPRSWRRGHVLPLRSAKIFKPLACLELRGSTG) directs the protein to the chloroplast. Residue aspartate 64 is part of the active site.

It belongs to the 4-hydroxybenzoyl-CoA thioesterase family. As to expression, expressed in endodermal and peridermal cells in young and mature roots, in boundaries of stem lateral organs and developing seeds.

Its subcellular location is the plastid. The protein resides in the chloroplast. Functionally, acyl-ACP thioesterase involved in the production of fatty acids and beta-keto fatty acids. Can produce beta-keto fatty acids of medium chain (8:0 and 10:0) and small amounts of 8:0 fatty acid when expressed in a heterologous organism (E.coli). May play a role in suberin biosynthesis. In Arabidopsis thaliana (Mouse-ear cress), this protein is Acyl-acyl carrier protein thioesterase ATL2, chloroplastic.